The primary structure comprises 505 residues: Chromosomal replication initiator protein DnaA (505 aa).

The interval 1–90 (MSVELWQQCV…RRSSAPRAAP (90 aa)) is domain I, interacts with DnaA modulators. The tract at residues 91 to 168 (NAPVSAAVAA…QVEGALKHTS (78 aa)) is domain II. The interval 169–385 (YLNRTFTFDT…GALKRVIAHS (217 aa)) is domain III, AAA+ region. Residues G213, G215, K216, and T217 each contribute to the ATP site. A domain IV, binds dsDNA region spans residues 386-505 (HFMGRDITIE…YKNLLRTLTT (120 aa)).

It belongs to the DnaA family. As to quaternary structure, oligomerizes as a right-handed, spiral filament on DNA at oriC.

Its subcellular location is the cytoplasm. Functionally, plays an essential role in the initiation and regulation of chromosomal replication. ATP-DnaA binds to the origin of replication (oriC) to initiate formation of the DNA replication initiation complex once per cell cycle. Binds the DnaA box (a 9 base pair repeat at the origin) and separates the double-stranded (ds)DNA. Forms a right-handed helical filament on oriC DNA; dsDNA binds to the exterior of the filament while single-stranded (ss)DNA is stabiized in the filament's interior. The ATP-DnaA-oriC complex binds and stabilizes one strand of the AT-rich DNA unwinding element (DUE), permitting loading of DNA polymerase. After initiation quickly degrades to an ADP-DnaA complex that is not apt for DNA replication. Binds acidic phospholipids. The chain is Chromosomal replication initiator protein DnaA from Pseudomonas putida (strain ATCC 700007 / DSM 6899 / JCM 31910 / BCRC 17059 / LMG 24140 / F1).